A 424-amino-acid chain; its full sequence is Splicing factor 3B subunit 4 (424 aa).

Ala2 is subject to N-acetylalanine. 2 consecutive RRM domains span residues 13–91 (ATVY…KASA) and 100–179 (ANIF…YAFK). A Phosphotyrosine modification is found at Tyr56. The segment at 207-424 (PHQLFADAPP…RGPLRGPLPQ (218 aa)) is disordered. Residues 222 to 231 (NPVVSSLGSG) show a composition bias toward low complexity. Positions 232 to 268 (LPPPGMPPPGSFPPPVPPPGALPPGIPPAMPPPPMPP) are enriched in pro residues. Low complexity-rich tracts occupy residues 269-280 (GAAGHGPPSAGT) and 303-323 (HPGMSQMQLAHHGPHGLGHPH). Composition is skewed to pro residues over residues 332–381 (QPPP…PLMP) and 388–424 (PPRPPPYGYQRGPLPPPRPTPRPPVPPRGPLRGPLPQ).

It belongs to the SF3B4 family. In terms of assembly, component of the 17S U2 SnRNP complex, a ribonucleoprotein complex that contains small nuclear RNA (snRNA) U2 and a number of specific proteins. Part of the SF3B subcomplex of the 17S U2 SnRNP complex. SF3B associates with the splicing subcomplex SF3A and a 12S RNA unit to form the U2 small nuclear ribonucleoproteins complex (U2 snRNP). SF3B4 has been found in complex spliceosome 'B' and 'C' as well. Component of the minor (U12-type spliceosome) spliceosome. Found in a complex with PRMT9, SF3B2 and SF3B4.

It is found in the nucleus. Its function is as follows. Component of the 17S U2 SnRNP complex of the spliceosome, a large ribonucleoprotein complex that removes introns from transcribed pre-mRNAs. The 17S U2 SnRNP complex (1) directly participates in early spliceosome assembly and (2) mediates recognition of the intron branch site during pre-mRNA splicing by promoting the selection of the pre-mRNA branch-site adenosine, the nucleophile for the first step of splicing. Within the 17S U2 SnRNP complex, SF3B4 is part of the SF3B subcomplex, which is required for 'A' complex assembly formed by the stable binding of U2 snRNP to the branchpoint sequence in pre-mRNA. Sequence independent binding of SF3A and SF3B subcomplexes upstream of the branch site is essential, it may anchor U2 snRNP to the pre-mRNA. May also be involved in the assembly of the 'E' complex. Also acts as a component of the minor spliceosome, which is involved in the splicing of U12-type introns in pre-mRNAs. The protein is Splicing factor 3B subunit 4 (SF3B4) of Homo sapiens (Human).